A 123-amino-acid chain; its full sequence is Small ribosomal subunit protein uS12 (123 aa).

Positions 1 to 26 (MPTINQLVRKPRKSRSSLNKAPALQH) are disordered. Asp-90 bears the 3-methylthioaspartic acid mark.

Belongs to the universal ribosomal protein uS12 family. As to quaternary structure, part of the 30S ribosomal subunit. Contacts proteins S8 and S17. May interact with IF1 in the 30S initiation complex.

With S4 and S5 plays an important role in translational accuracy. Its function is as follows. Interacts with and stabilizes bases of the 16S rRNA that are involved in tRNA selection in the A site and with the mRNA backbone. Located at the interface of the 30S and 50S subunits, it traverses the body of the 30S subunit contacting proteins on the other side and probably holding the rRNA structure together. The combined cluster of proteins S8, S12 and S17 appears to hold together the shoulder and platform of the 30S subunit. This chain is Small ribosomal subunit protein uS12, found in Ehrlichia chaffeensis (strain ATCC CRL-10679 / Arkansas).